The primary structure comprises 341 residues: Heat-inducible transcription repressor HrcA (341 aa).

It belongs to the HrcA family.

Negative regulator of class I heat shock genes (grpE-dnaK-dnaJ and groELS operons). Prevents heat-shock induction of these operons. The sequence is that of Heat-inducible transcription repressor HrcA from Brevibacillus brevis (strain 47 / JCM 6285 / NBRC 100599).